The primary structure comprises 602 residues: Sodium- and chloride-dependent GABA transporter 2 (602 aa).

Over 1 to 40 (MDSRVSGTTSNGETKPVCPGLEKAAEDGALQREQWSNKME) the chain is Cytoplasmic. Transmembrane regions (helical) follow at residues 41–61 (FLLS…FPYL), 68–88 (GAFF…VFLL), and 121–141 (IVTL…FYLF). Topologically, residues 142-206 (SSFTIDLPWG…GIQHLGALRW (65 aa)) are extracellular. An intrachain disulfide couples C153 to C162. N-linked (GlcNAc...) asparagine glycosylation is found at N169 and N173. A run of 2 helical transmembrane segments spans residues 207–227 (ELAL…WKGV) and 233–253 (VVYF…IRGV). N269 carries N-linked (GlcNAc...) asparagine glycosylation. Transmembrane regions (helical) follow at residues 282–302 (AGTQ…ALGS), 319–339 (FLNS…LGFM), 366–386 (VVML…VVLL), 418–438 (VLIL…LTEG), 453–473 (GMCL…AYGA), 490–510 (PLIK…TFLF), and 528–548 (WWGD…IPAW). Over 549-602 (SCYKLSTLKGSFRERVRQLLCPAKDLPQGHREGPSAPATPRTSLLILTELEPHH) the chain is Cytoplasmic. T587 is subject to Phosphothreonine. The residue at position 591 (S591) is a Phosphoserine.

It belongs to the sodium:neurotransmitter symporter (SNF) (TC 2.A.22) family. SLC6A13 subfamily.

The protein resides in the cell membrane. It localises to the basolateral cell membrane. It catalyses the reaction 4-aminobutanoate(out) + chloride(out) + 2 Na(+)(out) = 4-aminobutanoate(in) + chloride(in) + 2 Na(+)(in). The enzyme catalyses taurine(out) + chloride(out) + 2 Na(+)(out) = taurine(in) + chloride(in) + 2 Na(+)(in). The catalysed reaction is beta-alanine(out) + chloride(out) + 2 Na(+)(out) = beta-alanine(in) + chloride(in) + 2 Na(+)(in). It carries out the reaction hypotaurine(out) + chloride(out) + 2 Na(+)(out) = hypotaurine(in) + chloride(in) + 2 Na(+)(in). Its function is as follows. Mediates sodium- and chloride-dependent transport of gamma-aminobutyric acid (GABA). Can also mediate transport of beta-alanine, taurine and hypotaurine. The protein is Sodium- and chloride-dependent GABA transporter 2 (SLC6A13) of Bos taurus (Bovine).